A 920-amino-acid chain; its full sequence is Isoleucine--tRNA ligase (920 aa).

The short motif at 58–68 is the 'HIGH' region element; the sequence is PYANGHLHLGH. Glu-569 provides a ligand contact to L-isoleucyl-5'-AMP. The 'KMSKS' region motif lies at 610-614; it reads KMSKS. Residue Lys-613 participates in ATP binding. Zn(2+) is bound by residues Cys-895, Cys-898, Cys-910, and Cys-913.

The protein belongs to the class-I aminoacyl-tRNA synthetase family. IleS type 1 subfamily. As to quaternary structure, monomer. Zn(2+) serves as cofactor.

It localises to the cytoplasm. The enzyme catalyses tRNA(Ile) + L-isoleucine + ATP = L-isoleucyl-tRNA(Ile) + AMP + diphosphate. Catalyzes the attachment of isoleucine to tRNA(Ile). As IleRS can inadvertently accommodate and process structurally similar amino acids such as valine, to avoid such errors it has two additional distinct tRNA(Ile)-dependent editing activities. One activity is designated as 'pretransfer' editing and involves the hydrolysis of activated Val-AMP. The other activity is designated 'posttransfer' editing and involves deacylation of mischarged Val-tRNA(Ile). The protein is Isoleucine--tRNA ligase of Helicobacter pylori (strain J99 / ATCC 700824) (Campylobacter pylori J99).